Reading from the N-terminus, the 483-residue chain is Glycogen synthase kinase-3 alpha (483 aa).

Residues 1 to 15 (MSGGGPSGGGPGGSG) show a composition bias toward gly residues. Positions 1–96 (MSGGGPSGGG…PPPGVKLGRD (96 aa)) are disordered. An N-acetylserine modification is found at Ser2. Phosphoserine is present on Ser2. Position 21 is a phosphoserine; by PKB/AKT1 (Ser21). A compositionally biased stretch (gly residues) spans 25-82 (PGGGGGGGGGGPGGSASGPGGTGGGKASVGAMGGGVGASSSGGGPGGSGGGGSGGPGA). 3 positions are modified to phosphoserine: Ser72, Ser77, and Ser97. The 285-residue stretch at 119-403 (YTDIKVIGNG…PLEACAHSFF (285 aa)) folds into the Protein kinase domain. Residues 125 to 133 (IGNGSFGVV) and Lys148 contribute to the ATP site. The active-site Proton acceptor is the Asp244. Residue Tyr279 is modified to Phosphotyrosine. Residues 449 to 483 (AGTTTLTPSSQALTETPTSSDWQSTDATPTLTNSS) are disordered.

It belongs to the protein kinase superfamily. CMGC Ser/Thr protein kinase family. GSK-3 subfamily. Monomer. Interacts with ARRB2. Interacts with AXIN1 and CTNNB1/beta-catenin. Interacts with CTNND2. Interacts with LMBR1L. Interacts with DDX3X. Interacts with TNFRSF10B. Interacts with RICTOR; the interaction results in phosphorylation of RICTOR at 'Thr-1695' by GSK3A which facilitates FBXW7-mediated ubiquitination and subsequent degradation of RICTOR. As to quaternary structure, (Microbial infection) Interacts with M.tuberculosis PtpA. Post-translationally, phosphorylated by AKT1 at Ser-21: upon insulin-mediated signaling, the activated PKB/AKT1 protein kinase phosphorylates and deactivates GSK3A, resulting in the dephosphorylation and activation of GYS1. Activated by phosphorylation at Tyr-279. In terms of processing, (Microbial infection) Dephosphorylated at Tyr-279 by M.tuberculosis PtpA, which leads to prevention of apoptosis during early stages of microbial infection.

The enzyme catalyses L-seryl-[tau protein] + ATP = O-phospho-L-seryl-[tau protein] + ADP + H(+). It carries out the reaction L-threonyl-[tau protein] + ATP = O-phospho-L-threonyl-[tau protein] + ADP + H(+). It catalyses the reaction L-seryl-[protein] + ATP = O-phospho-L-seryl-[protein] + ADP + H(+). The catalysed reaction is L-threonyl-[protein] + ATP = O-phospho-L-threonyl-[protein] + ADP + H(+). With respect to regulation, activated by phosphorylation at Tyr-279. In response to insulin, inhibited by phosphorylation at Ser-21 by PKB/AKT1; phosphorylation at this site causes a conformational change, preventing access of substrates to the active site. Inhibited by lithium. Functionally, constitutively active protein kinase that acts as a negative regulator in the hormonal control of glucose homeostasis, Wnt signaling and regulation of transcription factors and microtubules, by phosphorylating and inactivating glycogen synthase (GYS1 or GYS2), CTNNB1/beta-catenin, APC and AXIN1. Requires primed phosphorylation of the majority of its substrates. Contributes to insulin regulation of glycogen synthesis by phosphorylating and inhibiting GYS1 activity and hence glycogen synthesis. Regulates glycogen metabolism in liver, but not in muscle. May also mediate the development of insulin resistance by regulating activation of transcription factors. In Wnt signaling, regulates the level and transcriptional activity of nuclear CTNNB1/beta-catenin. Facilitates amyloid precursor protein (APP) processing and the generation of APP-derived amyloid plaques found in Alzheimer disease. May be involved in the regulation of replication in pancreatic beta-cells. Is necessary for the establishment of neuronal polarity and axon outgrowth. Through phosphorylation of the anti-apoptotic protein MCL1, may control cell apoptosis in response to growth factors deprivation. Acts as a regulator of autophagy by mediating phosphorylation of KAT5/TIP60 under starvation conditions which activates KAT5/TIP60 acetyltransferase activity and promotes acetylation of key autophagy regulators, such as ULK1 and RUBCNL/Pacer. Negatively regulates extrinsic apoptotic signaling pathway via death domain receptors. Promotes the formation of an anti-apoptotic complex, made of DDX3X, BRIC2 and GSK3B, at death receptors, including TNFRSF10B. The anti-apoptotic function is most effective with weak apoptotic signals and can be overcome by stronger stimulation. Phosphorylates mTORC2 complex component RICTOR at 'Thr-1695' which facilitates FBXW7-mediated ubiquitination and subsequent degradation of RICTOR. The protein is Glycogen synthase kinase-3 alpha (GSK3A) of Homo sapiens (Human).